The chain runs to 330 residues: MKRRQKRKHLENEESQETAEKGGGMSKSQEDALQPGSTRVAKGWSQGVGEVTSTSEYCSCVSSSRKLIHSGIQRIHRDSPQPQSPLAQVQERGETPPRSQHVSLSSYSSYKTCVSSLCVNKEERGMKIYYMQVQMNKGVAVSWETEETLESLEKQPRMEEVTLSEVVRVGTPPSDVSTRNLLSDSEPSGEEKEHEERTESDSLPGSPTVEDTPRAKTPDWLVTMENGFRCMACCRVFTTMEALQEHVQFGIREGFSCHVFHLTMAQLTGNMESESTQDEQEEENGNEKEEEEKPEAKEEEGQPTEEDLGLRRSWSQCPGCVFHSPKDRNS.

Disordered regions lie at residues 1 to 54 (MKRR…VTST), 76 to 104 (HRDSPQPQSPLAQVQERGETPPRSQHVSL), and 169 to 218 (VGTP…AKTP). Residues 174-185 (SDVSTRNLLSDS) show a composition bias toward polar residues. Residues 189-200 (GEEKEHEERTES) show a composition bias toward basic and acidic residues. Position 217 is a phosphothreonine (T217). A C2H2-type; degenerate zinc finger spans residues 228–252 (FRCMACCRVFTTMEALQEHVQFGIR). The interval 270-330 (NMESESTQDE…VFHSPKDRNS (61 aa)) is disordered. The span at 275–293 (STQDEQEEENGNEKEEEEK) shows a compositional bias: acidic residues. The residue at position 315 (S315) is a Phosphoserine.

The protein belongs to the FAM170 family. Expressed strongly in testis and brain and weakly in prostate, spleen, pancreas and uterus.

It localises to the nucleus. Functionally, acts as a nuclear transcription factor that positively regulates the expression of heat shock genes. Binds to heat shock promoter elements (HSE). This chain is Protein FAM170A (FAM170A), found in Homo sapiens (Human).